Here is a 231-residue protein sequence, read N- to C-terminus: L-ribulose-5-phosphate 4-epimerase AraD (231 aa).

Residues 27-28 (GN), 44-45 (SG), and 74-75 (SS) contribute to the substrate site. Aspartate 76, histidine 95, and histidine 97 together coordinate Zn(2+). The active-site Proton donor/acceptor is the aspartate 120. Position 171 (histidine 171) interacts with Zn(2+). Tyrosine 229 (proton donor/acceptor) is an active-site residue.

This sequence belongs to the aldolase class II family. AraD/FucA subfamily. Homotetramer. It depends on Zn(2+) as a cofactor.

It carries out the reaction L-ribulose 5-phosphate = D-xylulose 5-phosphate. It functions in the pathway carbohydrate degradation; L-arabinose degradation via L-ribulose; D-xylulose 5-phosphate from L-arabinose (bacterial route): step 3/3. Its activity is regulated as follows. Inhibited by glycolohydroxamate at concentration above 0.1 mM. Its function is as follows. Involved in the degradation of L-arabinose. Catalyzes the interconversion of L-ribulose 5-phosphate (LRu5P) and D-xylulose 5-phosphate (D-Xu5P) via a retroaldol/aldol mechanism (carbon-carbon bond cleavage analogous to a class II aldolase reaction). The polypeptide is L-ribulose-5-phosphate 4-epimerase AraD (Escherichia coli (strain K12)).